A 689-amino-acid chain; its full sequence is Protein SDA1 homolog (689 aa).

3 disordered regions span residues 227–260 (DEKK…TKNK), 485–512 (EQEK…DGEW), and 623–689 (TDRK…RLMK). Positions 258-319 (KNKKKLDKAM…RFEVKLMHMD (62 aa)) form a coiled coil. A compositionally biased stretch (acidic residues) spans 492–512 (PEEDDGWESASLSDDDEDGEW). Over residues 670–681 (RDKQIALRDSLL) the composition is skewed to basic and acidic residues.

This sequence belongs to the SDA1 family.

The protein resides in the nucleus. It localises to the nucleolus. Required for 60S pre-ribosomal subunits export to the cytoplasm. In Xenopus laevis (African clawed frog), this protein is Protein SDA1 homolog (sdad1).